A 567-amino-acid chain; its full sequence is Formate--tetrahydrofolate ligase (567 aa).

Thr-68–Thr-75 lines the ATP pocket.

This sequence belongs to the formate--tetrahydrofolate ligase family.

The catalysed reaction is (6S)-5,6,7,8-tetrahydrofolate + formate + ATP = (6R)-10-formyltetrahydrofolate + ADP + phosphate. Its pathway is one-carbon metabolism; tetrahydrofolate interconversion. This Desulforamulus reducens (strain ATCC BAA-1160 / DSM 100696 / MI-1) (Desulfotomaculum reducens) protein is Formate--tetrahydrofolate ligase.